A 344-amino-acid chain; its full sequence is Lysophosphatidic acid receptor 6 (344 aa).

The Extracellular segment spans residues 1-19; that stretch reads MVSVNSSHCFYNDSFKYTL. Asparagine 5 carries an N-linked (GlcNAc...) asparagine glycan. The helical transmembrane segment at 20-46 threads the bilayer; it reads YGCMFSMVFVLGLISNCVAIYIFICVL. Residues 47–55 lie on the Cytoplasmic side of the membrane; it reads KVRNETTTY. A helical membrane pass occupies residues 56–79; it reads MINLAMSDLLFVFTLPFRIFYFTT. The Extracellular segment spans residues 80 to 92; the sequence is RNWPFGDLLCKIS. Cysteines 89 and 168 form a disulfide. Residues 93–112 form a helical membrane-spanning segment; the sequence is VMLFYTNMYGSILFLTCISV. At 113–133 the chain is on the cytoplasmic side; that stretch reads DRFLAIVYPFKSKTLRTKRNA. A helical membrane pass occupies residues 134–154; that stretch reads KIVCTGVWLTVIGGSAPAVFV. Topologically, residues 155-181 are extracellular; the sequence is QSTHSQGNNASEACFENFPEATWKTYL. Residues 182–209 form a helical membrane-spanning segment; the sequence is SRIVIFIEIVGFFIPLILNVTCSSMVLK. Residues 210–227 lie on the Cytoplasmic side of the membrane; that stretch reads TLTKPVTLSRSKINKTKV. A helical transmembrane segment spans residues 228-253; sequence LKMIFVHLIIFCFCFVPYNINLILYS. Residues 254–272 are Extracellular-facing; the sequence is LVRTQTFVNCSVVAAVRTM. Residues 273–292 form a helical membrane-spanning segment; sequence YPITLCIAVSNCCFDPIVYY. Residue cysteine 284 is the site of S-palmitoyl cysteine attachment. Residues 293–344 are Cytoplasmic-facing; sequence FTSDTIQNSIKMKNWSVRRSDFRFSEVHGAENFIQHNLQTLKSKIFDNESAA.

Belongs to the G-protein coupled receptor 1 family. As to expression, expressed ubiquitously, including in skin and hair follicle cells. Detected in both Henle's and Huxley's layers of the inner root sheath of the hair follicle and in suprabasal layers of the epidermis (at protein level). Expressed at low levels in peripheral blood leukocytes.

Its subcellular location is the cell membrane. Functionally, binds to oleoyl-L-alpha-lysophosphatidic acid (LPA). Intracellular cAMP is involved in the receptor activation. Important for the maintenance of hair growth and texture. The protein is Lysophosphatidic acid receptor 6 (LPAR6) of Homo sapiens (Human).